Here is a 68-residue protein sequence, read N- to C-terminus: MSKLGALLIICLLLFPLTAVPMDGDQPADRPAERMQDDISFEQHPMFDATRRCCNAGFCRFGCTPCCY.

Residues 1–19 form the signal peptide; it reads MSKLGALLIICLLLFPLTA. A propeptide spanning residues 20-50 is cleaved from the precursor; the sequence is VPMDGDQPADRPAERMQDDISFEQHPMFDAT. 3 disulfide bridges follow: cysteine 53-cysteine 67, cysteine 54-cysteine 63, and cysteine 59-cysteine 66. Proline 65 is modified (4-hydroxyproline; partial).

Post-translationally, contains 3 disulfide bonds. In terms of tissue distribution, expressed by the venom duct. Both hydroxylated and non-hydroxylated forms are mostly and only present in part 2 (proximal of the venom bulb) of the venom duct, respectively.

The protein localises to the secreted. In Conus textile (Cloth-of-gold cone), this protein is TxMMSK-03.